Consider the following 687-residue polypeptide: Glycine--tRNA ligase beta subunit (687 aa).

Belongs to the class-II aminoacyl-tRNA synthetase family. As to quaternary structure, tetramer of two alpha and two beta subunits.

The protein resides in the cytoplasm. The catalysed reaction is tRNA(Gly) + glycine + ATP = glycyl-tRNA(Gly) + AMP + diphosphate. This is Glycine--tRNA ligase beta subunit from Trichlorobacter lovleyi (strain ATCC BAA-1151 / DSM 17278 / SZ) (Geobacter lovleyi).